The sequence spans 67 residues: Small ribosomal subunit protein eS31 (67 aa).

4 residues coordinate Zn(2+): cysteine 31, cysteine 34, cysteine 49, and cysteine 52. Residues 31 to 52 (CPKCGAGVFMAEHLNRFACGKC) form a C4-type zinc finger.

It belongs to the eukaryotic ribosomal protein eS31 family. In terms of assembly, part of the 30S ribosomal subunit. The cofactor is Zn(2+).

The chain is Small ribosomal subunit protein eS31 from Methanococcus maripaludis (strain DSM 14266 / JCM 13030 / NBRC 101832 / S2 / LL).